The primary structure comprises 203 residues: MIGRLRGTLAEKQPPHLILDVNGLGYELEVPMTTLYRLPSVGEPITLHTHLVVREDAQLLYGFIGKRDRDFFRELIRLNGVGPKLALALMSSLEVDELVRAVSAQDTSALTKVPGVGKKTAERLLVELKDRFKAWEVVPSMFALVPNQPDMPAGQVASAESDAVSALISLGYKPQEASKAVSAIKDKNLSSEDMIRRALKGMI.

Residues 1–64 are domain I; the sequence is MIGRLRGTLA…EDAQLLYGFI (64 aa). The segment at 65-143 is domain II; that stretch reads GKRDRDFFRE…AWEVVPSMFA (79 aa). Positions 144 to 154 are flexible linker; the sequence is LVPNQPDMPAG. The tract at residues 155–203 is domain III; it reads QVASAESDAVSALISLGYKPQEASKAVSAIKDKNLSSEDMIRRALKGMI.

The protein belongs to the RuvA family. Homotetramer. Forms an RuvA(8)-RuvB(12)-Holliday junction (HJ) complex. HJ DNA is sandwiched between 2 RuvA tetramers; dsDNA enters through RuvA and exits via RuvB. An RuvB hexamer assembles on each DNA strand where it exits the tetramer. Each RuvB hexamer is contacted by two RuvA subunits (via domain III) on 2 adjacent RuvB subunits; this complex drives branch migration. In the full resolvosome a probable DNA-RuvA(4)-RuvB(12)-RuvC(2) complex forms which resolves the HJ.

The protein resides in the cytoplasm. Its function is as follows. The RuvA-RuvB-RuvC complex processes Holliday junction (HJ) DNA during genetic recombination and DNA repair, while the RuvA-RuvB complex plays an important role in the rescue of blocked DNA replication forks via replication fork reversal (RFR). RuvA specifically binds to HJ cruciform DNA, conferring on it an open structure. The RuvB hexamer acts as an ATP-dependent pump, pulling dsDNA into and through the RuvAB complex. HJ branch migration allows RuvC to scan DNA until it finds its consensus sequence, where it cleaves and resolves the cruciform DNA. The chain is Holliday junction branch migration complex subunit RuvA from Pseudomonas fluorescens (strain SBW25).